The following is a 474-amino-acid chain: Coiled-coil domain-containing protein 174 (474 aa).

Disordered regions lie at residues G39–L86 and G129–E170. Composition is skewed to basic and acidic residues over residues R64–L86 and G129–A142. A coiled-coil region spans residues R64–K98. Residues N148–S157 show a composition bias toward acidic residues. S206 is modified (phosphoserine). A coiled-coil region spans residues L276–K317. 2 disordered regions span residues R309–W372 and E389–Q461. 2 stretches are compositionally biased toward basic and acidic residues: residues S316–A327 and I356–W372. Residues R410 to W419 are compositionally biased toward polar residues. Residues G430–P453 are compositionally biased toward low complexity.

It localises to the nucleus. Its function is as follows. Probably involved in neuronal development. The protein is Coiled-coil domain-containing protein 174 (Ccdc174) of Rattus norvegicus (Rat).